Reading from the N-terminus, the 359-residue chain is DNA polymerase IV (359 aa).

The UmuC domain maps to 4-185 (IIHIDMDCYF…LSLRKIPGVG (182 aa)). Mg(2+) contacts are provided by Asp-8 and Asp-103. Residue Glu-104 is part of the active site.

The protein belongs to the DNA polymerase type-Y family. Monomer. The cofactor is Mg(2+).

It localises to the cytoplasm. It carries out the reaction DNA(n) + a 2'-deoxyribonucleoside 5'-triphosphate = DNA(n+1) + diphosphate. Poorly processive, error-prone DNA polymerase involved in untargeted mutagenesis. Copies undamaged DNA at stalled replication forks, which arise in vivo from mismatched or misaligned primer ends. These misaligned primers can be extended by PolIV. Exhibits no 3'-5' exonuclease (proofreading) activity. May be involved in translesional synthesis, in conjunction with the beta clamp from PolIII. In Shewanella sp. (strain ANA-3), this protein is DNA polymerase IV.